The primary structure comprises 216 residues: Uracil phosphoribosyltransferase (216 aa).

Residues Arg-84, Arg-109, and 137–145 (DPMLATGGS) contribute to the 5-phospho-alpha-D-ribose 1-diphosphate site. Residues Ile-202 and 207-209 (GDA) contribute to the uracil site. Asp-208 lines the 5-phospho-alpha-D-ribose 1-diphosphate pocket.

This sequence belongs to the UPRTase family. Requires Mg(2+) as cofactor.

It catalyses the reaction UMP + diphosphate = 5-phospho-alpha-D-ribose 1-diphosphate + uracil. It participates in pyrimidine metabolism; UMP biosynthesis via salvage pathway; UMP from uracil: step 1/1. With respect to regulation, allosterically activated by GTP. Catalyzes the conversion of uracil and 5-phospho-alpha-D-ribose 1-diphosphate (PRPP) to UMP and diphosphate. This Nostoc sp. (strain PCC 7120 / SAG 25.82 / UTEX 2576) protein is Uracil phosphoribosyltransferase.